An 86-amino-acid polypeptide reads, in one-letter code: Large ribosomal subunit protein uL23 (86 aa).

Belongs to the universal ribosomal protein uL23 family. Part of the 50S ribosomal subunit. Contacts protein L29.

In terms of biological role, binds to 23S rRNA. One of the proteins that surrounds the polypeptide exit tunnel on the outside of the ribosome. This Caldivirga maquilingensis (strain ATCC 700844 / DSM 13496 / JCM 10307 / IC-167) protein is Large ribosomal subunit protein uL23.